Reading from the N-terminus, the 1483-residue chain is Heme-responsive zinc finger transcription factor HAP1 (1483 aa).

The segment covering 1–50 has biased composition (polar residues); sequence MSNTPYNSSVPSIASMTQSSVSRSPNMHTATTPGANTSSNSPPLHMSSDS. Residues 1–56 are disordered; that stretch reads MSNTPYNSSVPSIASMTQSSVSRSPNMHTATTPGANTSSNSPPLHMSSDSSKIKRK. Cys-64, Cys-67, Cys-74, Cys-81, Cys-84, and Cys-93 together coordinate Zn(2+). The zn(2)-C6 fungal-type DNA-binding region spans 64 to 93; sequence CTICRKRKVKCDKLRPHCQQCTKTGVAHLC. Residues 105-134 are a coiled coil; that stretch reads EKELLKDNELKKLRERVKSLEKTLSKVHSS. Residues 162 to 176 show a composition bias toward polar residues; it reads VNANTGSASSASHMH. The interval 162–208 is disordered; the sequence is VNANTGSASSASHMHQQQQQQQQQEQQQDFSRSANANANSSSLSISN. A compositionally biased stretch (low complexity) spans 177 to 208; the sequence is QQQQQQQQQEQQQDFSRSANANANSSSLSISN. The interval 244–444 is heme-responsive; required for HMC formation; that stretch reads KGDPYLKLLW…NTIPHHQPQS (201 aa). HRM repeat units lie at residues 280–285, 299–304, 323–328, 347–352, 389–394, and 415–420; these read KCPINH, KCPVDH, RCPVDH, and RCPIDH. 2 stretches are compositionally biased toward polar residues: residues 432 to 447 and 706 to 734; these read STHN…SGSH and QLNA…NPTL. 2 disordered regions span residues 432–458 and 706–767; these read STHN…NRKH and QLNA…KENQ. Residues 735 to 759 show a composition bias toward low complexity; the sequence is NNNMSAATTNSSSRSGSADSRSGSN. One copy of the HRM 7 repeat lies at 1192–1197; it reads KCPVYQ. Disordered stretches follow at residues 1266 to 1289 and 1386 to 1411; these read DGYI…SNGL and NTDT…ASNS. The segment covering 1388-1411 has biased composition (polar residues); it reads DTSANGSALSTLTSPQGSDLASNS.

Binds DNA as a homodimer. Interacts with SRO9 and YDJ1. In the absence of heme, binds to at least four cellular proteins, including YDJ1 and SRO9, forming a high-molecular-weight complex (HMC) which results in repression of its activity and dictates its DNA-binding specificity.

It is found in the nucleus. In terms of biological role, regulation of oxygen dependent gene expression. It modulates the expression of Iso-1 (CYP1) and Iso-2 (CYP3) cytochrome c. In response to heme, promotes transcription of genes encoding functions required for respiration, controlling oxidative damage and repression of anaerobic genes. Binds to the sequence 5'-CGGNNNTNNCGG-3'. This chain is Heme-responsive zinc finger transcription factor HAP1 (HAP1), found in Saccharomyces cerevisiae (strain JAY291) (Baker's yeast).